Here is a 199-residue protein sequence, read N- to C-terminus: Transcription regulator complex subunit bur6 (199 aa).

Residues 106-199 are disordered; sequence PPIKAERKTK…SEASSASGDE (94 aa). Basic residues predominate over residues 112-121; sequence RKTKRPRARR. Over residues 185–199 the composition is skewed to polar residues; it reads SDKTTSEASSASGDE.

The protein belongs to the NC2 alpha/DRAP1 family.

The protein resides in the nucleus. Its function is as follows. Transcription regulator complex subunit that is essential for cell cycle progression. This is Transcription regulator complex subunit bur6 from Schizosaccharomyces pombe (strain 972 / ATCC 24843) (Fission yeast).